A 63-amino-acid chain; its full sequence is Large ribosomal subunit protein uL30 (63 aa).

This sequence belongs to the universal ribosomal protein uL30 family. As to quaternary structure, part of the 50S ribosomal subunit.

The polypeptide is Large ribosomal subunit protein uL30 (Stenotrophomonas maltophilia (strain K279a)).